Here is a 645-residue protein sequence, read N- to C-terminus: Cytochrome c oxidase subunit 1 (645 aa).

Residues 8–28 (LNYFYFSMWTGLSGAALATMI) traverse the membrane as a helical segment. Ca(2+) is bound by residues glutamate 31 and glycine 36. Histidine 54 contributes to the Fe(II)-heme a binding site. A run of 8 helical transmembrane segments spans residues 56-76 (LIMVFFVVVPIFFGGFANFLI), 90-110 (LNSIGFWIQPLGFLLVAKIAF), 247-267 (VLSVAVVLAGISTTISLLTLI), 282-302 (VLIPFITISLLLTLRLLAIVT), 337-357 (LFWFFGHPEVYILIIPSFGVA), 376-396 (IWAVYVMAYMGFVVWGHHMYL), 410-430 (ITIMICLPATIKLVNWTLTLA), and 438-458 (LVFLFFCSYVFFFLTGGFTGM). Histidine 343 provides a ligand contact to Cu cation. Positions 343–347 (HPEVY) form a cross-link, 1'-histidyl-3'-tyrosine (His-Tyr). Tyrosine 347 provides a ligand contact to O2. Histidine 392 and histidine 393 together coordinate Cu cation. Mg(2+)-binding residues include histidine 470 and aspartate 471. A run of 3 helical transmembrane segments spans residues 475-495 (VVAHFHLMLAGAAMMGAFTGL), 513-533 (FLHLVYYSAGIWTTFFPMFFL), and 555-575 (LASCGHFLTLAGVCFFFFGIF). Histidine 478 contributes to the heme a3 binding site. Histidine 480 is a binding site for Fe(II)-heme a.

Belongs to the heme-copper respiratory oxidase family. As to quaternary structure, component of the cytochrome c oxidase (complex IV, CIV), a multisubunit enzyme composed of a catalytic core of 3 subunits and several supernumerary subunits. The complex exists as a monomer or a dimer and forms supercomplexes (SCs) in the inner mitochondrial membrane with ubiquinol-cytochrome c oxidoreductase (cytochrome b-c1 complex, complex III, CIII). Heme serves as cofactor. Requires Cu cation as cofactor.

It localises to the mitochondrion inner membrane. The catalysed reaction is 4 Fe(II)-[cytochrome c] + O2 + 8 H(+)(in) = 4 Fe(III)-[cytochrome c] + 2 H2O + 4 H(+)(out). The protein operates within energy metabolism; oxidative phosphorylation. In terms of biological role, component of the cytochrome c oxidase, the last enzyme in the mitochondrial electron transport chain which drives oxidative phosphorylation. The respiratory chain contains 3 multisubunit complexes succinate dehydrogenase (complex II, CII), ubiquinol-cytochrome c oxidoreductase (cytochrome b-c1 complex, complex III, CIII) and cytochrome c oxidase (complex IV, CIV), that cooperate to transfer electrons derived from NADH and succinate to molecular oxygen, creating an electrochemical gradient over the inner membrane that drives transmembrane transport and the ATP synthase. Cytochrome c oxidase is the component of the respiratory chain that catalyzes the reduction of oxygen to water. Electrons originating from reduced cytochrome c in the intermembrane space (IMS) are transferred via the dinuclear copper A center (CU(A)) of subunit 2 and heme A of subunit 1 to the active site in subunit 1, a binuclear center (BNC) formed by heme A3 and copper B (CU(B)). The BNC reduces molecular oxygen to 2 water molecules using 4 electrons from cytochrome c in the IMS and 4 protons from the mitochondrial matrix. This chain is Cytochrome c oxidase subunit 1 (COI), found in Paramecium tetraurelia.